The sequence spans 346 residues: MSRVLQDAEFISLNSNDVKVNKGGCAAVATWIKEKLDSLGPQFAEWQNHELHPKTRDVSTLDWIFLVDILNFSFWSDVDVEDSGKHSKRFSIEYKGKLYTGYWSLCAAINKALDAGIPITSPAFYADEKQCPDTLIASVFDSATVEKIPLLEERIRIMRASGRVLVDSYHGSYCGLLKKCHNQAQRLIKLLLADFPDFRDVSVYKGRECYMLKRAQILVAETWACFQGQNYGRFDDIDSITMFADYRVPQILWQLGCLSYSSDFKKRLLKNELIAHNDPMEIEMRGCSIWAVEKILQNINRKDVNAITIDFFLWDLAKEWQAKGYKPSTQVDEVTIPCIRVRSIYY.

Residues His49, Phe243, Asp245, Asp310, and Asp315 each contribute to the queuine site. The Nucleophile or transition state stabilizer role is filled by Asp245.

The protein belongs to the QNG1 protein family.

It catalyses the reaction queuosine 5'-phosphate + H2O = queuine + D-ribose 5-phosphate. Catalyzes the hydrolysis of queuosine 5'-phosphate, releasing the nucleobase queuine (q). Is required for salvage of queuine from exogenous queuosine (Q) that is imported and then converted to queuosine 5'-phosphate intracellularly. This Schizosaccharomyces pombe (strain 972 / ATCC 24843) (Fission yeast) protein is Queuosine 5'-phosphate N-glycosylase/hydrolase.